Here is a 185-residue protein sequence, read N- to C-terminus: Ribosome-recycling factor (185 aa).

Positions 136 to 159 are disordered; it reads NEQLKSQQKDGKMSEDELKRSQDE.

This sequence belongs to the RRF family.

The protein localises to the cytoplasm. In terms of biological role, responsible for the release of ribosomes from messenger RNA at the termination of protein biosynthesis. May increase the efficiency of translation by recycling ribosomes from one round of translation to another. The chain is Ribosome-recycling factor from Pelotomaculum thermopropionicum (strain DSM 13744 / JCM 10971 / SI).